The sequence spans 380 residues: Cytochrome b (380 aa).

Transmembrane regions (helical) follow at residues 33 to 53 (FGSLLGLCLIIQILTGLFLAM), 77 to 98 (WLIRYMHANGASMFFICLFLHV), 113 to 133 (WNMGIVLLFAVMATAFMGYVL), and 178 to 198 (FFAFHFILPFIITALVLVHLL). His-83 and His-97 together coordinate heme b. 2 residues coordinate heme b: His-182 and His-196. A ubiquinone is bound at residue His-201. The next 4 helical transmembrane spans lie at 226–246 (IKDFLGVLILLMAFMILTLFF), 288–308 (LGGVLALILSIVILAFMPLLH), 320–340 (ITQTMYWILVADLLVLTWIGG), and 347–367 (FIIIGQTASIAYFAIIVILMP).

Belongs to the cytochrome b family. The cytochrome bc1 complex contains 11 subunits: 3 respiratory subunits (MT-CYB, CYC1 and UQCRFS1), 2 core proteins (UQCRC1 and UQCRC2) and 6 low-molecular weight proteins (UQCRH/QCR6, UQCRB/QCR7, UQCRQ/QCR8, UQCR10/QCR9, UQCR11/QCR10 and a cleavage product of UQCRFS1). This cytochrome bc1 complex then forms a dimer. Requires heme b as cofactor.

It is found in the mitochondrion inner membrane. Component of the ubiquinol-cytochrome c reductase complex (complex III or cytochrome b-c1 complex) that is part of the mitochondrial respiratory chain. The b-c1 complex mediates electron transfer from ubiquinol to cytochrome c. Contributes to the generation of a proton gradient across the mitochondrial membrane that is then used for ATP synthesis. The polypeptide is Cytochrome b (MT-CYB) (Microtus guentheri (Gunther's vole)).